We begin with the raw amino-acid sequence, 254 residues long: Germin-like protein 4-1 (254 aa).

An N-terminal signal peptide occupies residues 1–27; the sequence is MASRAFAAVFAAVALVVCSSVLPRALA. Cys-37 and Cys-52 form a disulfide bridge. The Cupin type-1 domain occupies 67-220; the sequence is KALGVPGNTV…AFMIDKDQVD (154 aa). The Mn(2+) site is built by His-115, His-117, Glu-122, and His-166.

Belongs to the germin family. As to quaternary structure, oligomer (believed to be a pentamer but probably hexamer).

Its subcellular location is the secreted. The protein resides in the extracellular space. It localises to the apoplast. Its function is as follows. May play a role in plant defense. Probably has no oxalate oxidase activity even if the active site is conserved. This chain is Germin-like protein 4-1, found in Oryza sativa subsp. japonica (Rice).